We begin with the raw amino-acid sequence, 447 residues long: Tubulin beta-4 chain (447 aa).

8 residues coordinate GTP: Gln11, Glu71, Ser140, Gly144, Thr145, Gly146, Asn206, and Asn228. Position 71 (Glu71) interacts with Mg(2+). Residues 428-447 are disordered; sequence QDATAEEYEEEEHDGEEEHA. Over residues 431 to 447 the composition is skewed to acidic residues; sequence TAEEYEEEEHDGEEEHA.

It belongs to the tubulin family. As to quaternary structure, dimer of alpha and beta chains. A typical microtubule is a hollow water-filled tube with an outer diameter of 25 nm and an inner diameter of 15 nM. Alpha-beta heterodimers associate head-to-tail to form protofilaments running lengthwise along the microtubule wall with the beta-tubulin subunit facing the microtubule plus end conferring a structural polarity. Microtubules usually have 13 protofilaments but different protofilament numbers can be found in some organisms and specialized cells. The cofactor is Mg(2+).

The protein resides in the cytoplasm. The protein localises to the cytoskeleton. Tubulin is the major constituent of microtubules, a cylinder consisting of laterally associated linear protofilaments composed of alpha- and beta-tubulin heterodimers. Microtubules grow by the addition of GTP-tubulin dimers to the microtubule end, where a stabilizing cap forms. Below the cap, tubulin dimers are in GDP-bound state, owing to GTPase activity of alpha-tubulin. This is Tubulin beta-4 chain (TUBB4) from Zea mays (Maize).